A 307-amino-acid chain; its full sequence is Golgi to ER traffic protein 2 (307 aa).

At 1–173 (MSDSTDSPAV…QAYDTYQQKL (173 aa)) the chain is on the cytoplasmic side. Residues 41–52 (LSQGSSVKTTGV) show a composition bias toward polar residues. The disordered stretch occupies residues 41 to 73 (LSQGSSVKTTGVKSVLDEPQPTATSSAIHDEDP). A helical membrane pass occupies residues 174 to 194 (WKSRFLVIRVVVTLFNFFYHY). Topologically, residues 195-220 (LNVPSFHASNYSYVRDLAQDEFPVRN) are lumenal. A helical membrane pass occupies residues 221-240 (FFTWFAAFEVIIVLQYYTVF). Residues 241 to 284 (HKLGLFHAANQNSMIMKLMSMGSMVLPQLNTYQPLVARFLGYYE) are Cytoplasmic-facing. Residues 285-305 (LFGIIFGDLSLVIVLFGLLSF) traverse the membrane as a helical segment. Over 306 to 307 (TK) the chain is Lumenal.

The protein belongs to the GET2 family. Component of the Golgi to ER traffic (GET) complex, which is composed of GET1, GET2 and GET3. Within the complex, GET1 and GET2 form a heterotetramer which is stabilized by phosphatidylinositol binding and which binds to the GET3 homodimer.

It is found in the endoplasmic reticulum membrane. It localises to the golgi apparatus membrane. In terms of biological role, required for the post-translational delivery of tail-anchored (TA) proteins to the endoplasmic reticulum. Together with GET1, acts as a membrane receptor for soluble GET3, which recognizes and selectively binds the transmembrane domain of TA proteins in the cytosol. The GET complex cooperates with the HDEL receptor ERD2 to mediate the ATP-dependent retrieval of resident ER proteins that contain a C-terminal H-D-E-L retention signal from the Golgi to the ER. The sequence is that of Golgi to ER traffic protein 2 from Candida tropicalis (strain ATCC MYA-3404 / T1) (Yeast).